An 81-amino-acid chain; its full sequence is HQQFHCAAAEGQAKKSFSCKYCEKVYVSLGALKMHIRTHTLPCKCHLCGKAFSRPWLLQGHIRTHTGEKPFSCQHCNRAFA.

4 consecutive C2H2-type zinc fingers follow at residues 1–5, 17–39, 43–65, and 71–81; these read HQQFH, FSCK…IRTH, CKCH…IRTH, and FSCQHCNRAFA.

It belongs to the snail C2H2-type zinc-finger protein family.

Its subcellular location is the nucleus. This Apis mellifera (Honeybee) protein is Escargot/snail protein homolog.